Reading from the N-terminus, the 289-residue chain is CRISPR-associated endoribonuclease Cas6 2 (289 aa).

The protein belongs to the CRISPR-associated endoribonuclease Cas6 family. Possibly part of the aCascade ribonucleoprotein complex. It depends on Mg(2+) as a cofactor.

CRISPR (clustered regularly interspaced short palindromic repeat) is an adaptive immune system that provides protection against mobile genetic elements (viruses, transposable elements and conjugative plasmids). CRISPR clusters contain sequences complementary to antecedent mobile elements and target invading nucleic acids. CRISPR clusters are transcribed and processed into CRISPR RNA (crRNA). Functions as a ssRNA-specific endoribonuclease, generating an 8 base-long tag known as the 5' handle. The chain is CRISPR-associated endoribonuclease Cas6 2 (cas6b) from Saccharolobus solfataricus (strain ATCC 35092 / DSM 1617 / JCM 11322 / P2) (Sulfolobus solfataricus).